The following is a 209-amino-acid chain: Bacteriorhodopsin (209 aa).

Residues leucine 1–alanine 17 form a helical membrane-spanning segment. Residues arginine 18–tyrosine 31 are Cytoplasmic-facing. The helical transmembrane segment at isoleucine 32–leucine 50 threads the bilayer. At glycine 51–isoleucine 66 the chain is on the extracellular side. Residues tyrosine 67 to aspartate 84 traverse the membrane as a helical segment. At leucine 85 to threonine 95 the chain is on the cytoplasmic side. A helical membrane pass occupies residues isoleucine 96–leucine 115. At serine 116 to arginine 128 the chain is on the extracellular side. Residues leucine 129–serine 148 traverse the membrane as a helical segment. At serine 149–lysine 166 the chain is on the cytoplasmic side. Residues threonine 167–valine 185 form a helical membrane-spanning segment. Topologically, residues glycine 186 to isoleucine 197 are extracellular. Residues glutamate 198–alanine 209 form a helical membrane-spanning segment.

It belongs to the archaeal/bacterial/fungal opsin family.

It localises to the cell membrane. In terms of biological role, light-driven proton pump. This chain is Bacteriorhodopsin (bop), found in Halobacterium halobium (strain shark).